Reading from the N-terminus, the 196-residue chain is Thymidine kinase (196 aa).

17–24 contributes to the ATP binding site; that stretch reads GPMFAGKT. Residue Glu92 is the Proton acceptor of the active site. Position 121 (Phe121) interacts with substrate. Zn(2+) contacts are provided by Cys146 and Cys149. 166–170 serves as a coordination point for substrate; that stretch reads LILAG. Positions 179 and 182 each coordinate Zn(2+).

Belongs to the thymidine kinase family.

The enzyme catalyses thymidine + ATP = dTMP + ADP + H(+). In terms of biological role, phosphorylates thymidine. ASFV replicates in the cytoplasm of infected cells and contains genes encoding a number of enzymes needed for DNA synthesis, including thymidine kinase. Important for growth in swine macrophages in vitro and is a virus virulence factor in swine. The polypeptide is Thymidine kinase (African swine fever virus (strain Badajoz 1971 Vero-adapted) (Ba71V)).